The chain runs to 58 residues: ATP synthase F(0) complex subunit k, mitochondrial (58 aa).

Residues lysine 16 and lysine 17 each carry the N6-acetyllysine modification. The chain crosses the membrane as a helical span at residues threonine 23 to phenylalanine 45.

Component of the ATP synthase complex composed at least of ATP5F1A/subunit alpha, ATP5F1B/subunit beta, ATP5MC1/subunit c (homooctomer), MT-ATP6/subunit a, MT-ATP8/subunit 8, ATP5ME/subunit e, ATP5MF/subunit f, ATP5MG/subunit g, ATP5MK/subunit k, ATP5MJ/subunit j, ATP5F1C/subunit gamma, ATP5F1D/subunit delta, ATP5F1E/subunit epsilon, ATP5PF/subunit F6, ATP5PB/subunit b, ATP5PD/subunit d, ATP5PO/subunit OSCP. ATP synthase complex consists of a soluble F(1) head domain (subunits alpha(3) and beta(3)) - the catalytic core - and a membrane F(0) domain - the membrane proton channel (subunits c, a, 8, e, f, g, k and j). These two domains are linked by a central stalk (subunits gamma, delta, and epsilon) rotating inside the F1 region and a stationary peripheral stalk (subunits F6, b, d, and OSCP). The ATP synthase complex/complex V exists as a monomeric and a dimeric supercomplex that helps shape mitochondrial cristae to optimize proton flow.

It localises to the mitochondrion membrane. Its function is as follows. Subunit k, of the mitochondrial membrane ATP synthase complex (F(1)F(0) ATP synthase or Complex V) that produces ATP from ADP in the presence of a proton gradient across the membrane which is generated by electron transport complexes of the respiratory chain. ATP synthase complex consist of a soluble F(1) head domain - the catalytic core - and a membrane F(1) domain - the membrane proton channel. These two domains are linked by a central stalk rotating inside the F(1) region and a stationary peripheral stalk. During catalysis, ATP synthesis in the catalytic domain of F(1) is coupled via a rotary mechanism of the central stalk subunits to proton translocation. In vivo, can only synthesize ATP although its ATP hydrolase activity can be activated artificially in vitro. Part of the complex F(0) domain. Required for dimerization of the ATP synthase complex and as such regulates ATP synthesis in the mitochondria. This is ATP synthase F(0) complex subunit k, mitochondrial from Homo sapiens (Human).